Reading from the N-terminus, the 620-residue chain is Ferric/cupric reductase transmembrane component 7 (620 aa).

Residues 1–45 (MIEERDLVLSNGIHCIADIHSELYARLKKESQAATPWVYQKQYGK) lie on the Extracellular side of the membrane. Residues 46–66 (FVTYFVAVIIFLSLIKKLAFM) form a helical membrane-spanning segment. The Cytoplasmic portion of the chain corresponds to 67–107 (YYDSSEEFLPEKKNSPTTPSVFLARIMTKLVAFNRYICYRK). The chain crosses the membrane as a helical span at residues 108–128 (FPTLIFSYLGIPTSVGTFLVV). Residues 129–167 (MATTLYTLLYCFVPHPFYRPCAGFGSPPLSVRAGIMAIS) lie on the Extracellular side of the membrane. The 160-residue stretch at 161–320 (AGIMAISLVP…LAVKGYLRPG (160 aa)) folds into the Ferric oxidoreductase domain. A helical membrane pass occupies residues 168 to 188 (LVPFVFSLSGKINVIGWLVGL). Residues 189 to 194 (SYEKIN) are Cytoplasmic-facing. The chain crosses the membrane as a helical span at residues 195–215 (IYHQWASILCLFFSWVHVIPF). Residues His197 and His211 each contribute to the heme site. At 216–237 (LRQARHEGGYERMHQRWKASDM) the chain is on the extracellular side. The chain crosses the membrane as a helical span at residues 238 to 258 (WRSGVPPILFLNLLWLSSLPI). The Cytoplasmic portion of the chain corresponds to 259–265 (ARRHFYE). The chain crosses the membrane as a helical span at residues 266-286 (IFLQLHWILAVGFYISLFYHV). His271 and His285 together coordinate heme. At 287-292 (YPELNS) the chain is on the extracellular side. Residues 293 to 313 (HMYLVATIVVWFAQLFYRLAV) form a helical membrane-spanning segment. Topologically, residues 314 to 620 (KGYLRPGRSF…CYLHSESFGY (307 aa)) are cytoplasmic. Residues 321 to 419 (RSFMASTIAN…DGPYGGIERD (99 aa)) form the FAD-binding FR-type domain. Position 369–375 (369–375 (HPFSIFP)) interacts with FAD. 411-414 (GPYG) is a binding site for NADP(+). The tract at residues 519–543 (SDQSDLAKREKDTEFGQDDTESNST) is disordered. Residues 523–532 (DLAKREKDTE) are compositionally biased toward basic and acidic residues. Residue 578–579 (CF) participates in NADP(+) binding.

This sequence belongs to the ferric reductase (FRE) family. FAD serves as cofactor.

The protein resides in the cell membrane. The catalysed reaction is 2 a Fe(II)-siderophore + NADP(+) + H(+) = 2 a Fe(III)-siderophore + NADPH. In terms of biological role, cell surface metalloreductase. May be involved in copper homeostasis. The polypeptide is Ferric/cupric reductase transmembrane component 7 (FRE7) (Saccharomyces cerevisiae (strain ATCC 204508 / S288c) (Baker's yeast)).